The sequence spans 992 residues: Epstein-Barr nuclear antigen 6 (992 aa).

Residues 1–70 (MESFEGQGDS…SRGDENRGWM (70 aa)) are disordered. Residues 12–31 (QSPDNERGDNVQTTGEHDQD) show a composition bias toward basic and acidic residues. The tract at residues 130–159 (LILDSGLDTQHILCFVMAARQRLQDIRRGP) is interaction with host PIM1. 3 disordered regions span residues 355-905 (ATGG…DSMA), 931-954 (PLDI…PARC), and 967-992 (DNSE…SELD). The segment covering 381–391 (VELESSDDELP) has biased composition (acidic residues). The span at 445-461 (AQSTPERPGPSEQSSVT) shows a compositional bias: polar residues. The segment covering 479–495 (QPPPVPKPVPVKPTPPP) has biased composition (pro residues). Positions 506 to 520 (YDDDVIEVIDVETTE) are enriched in acidic residues. The 1-1; approximate repeat unit spans residues 551 to 555 (PPTVS). Positions 551 to 610 (PPTVSPSDTGPPAVGPPAAGPPAAGPPAAGPPAAGPPAAGPPAAGPRILAPLSAGPPAAG) are 12 X 5 AA approximate tandem repeats of P-P-A-A-G. One copy of the 2-1; approximate repeat lies at 556–560 (PSDTG). One copy of the 3-1; approximate repeat lies at 561–565 (PPAVG). Positions 563–594 (AVGPPAAGPPAAGPPAAGPPAAGPPAAGPPAA) are enriched in pro residues. 6 consecutive repeat copies span residues 566–570 (PPAAG), 571–575 (PPAAG), 576–580 (PPAAG), 581–585 (PPAAG), 586–590 (PPAAG), and 591–595 (PPAAG). Positions 595–611 (GPRILAPLSAGPPAAGP) are enriched in low complexity. The stretch at 596–600 (PRILA) is one 10-1; approximate repeat. The 11-1; approximate repeat unit spans residues 601–605 (PLSAG). The stretch at 606 to 610 (PPAAG) is one 12-1 repeat. Composition is skewed to polar residues over residues 659–676 (TQMQ…TQPT) and 700–714 (IESS…TQPI). Positions 715 to 724 (SHEEQPRYED) are enriched in basic and acidic residues. Composition is skewed to low complexity over residues 738-764 (AAQP…QGYQ) and 772-781 (PYQGYQEPPA). A run of 3 repeats spans residues 741-753 (PAPQ…YQEP), 754-766 (PAPQ…YQEP), and 767-779 (PPPQ…YQEP). The tract at residues 741–779 (PAPQAPYQGYQEPPAPQAPYQGYQEPPPPQAPYQGYQEP) is 3 X 13 AA tandem repeats of P-[AP]-P-Q-A-P-Y-Q-G-Y-Q-E-P. Positions 845 to 857 (DQVSQFPHLQSET) are enriched in polar residues. The segment covering 859 to 881 (PPRLQLSLVPLVSSSAPSWSSPQ) has biased composition (low complexity). Over residues 882 to 899 (PRAPIRPIPTRFPPPPMP) the composition is skewed to pro residues.

The protein belongs to the herpesviridae EBNA-6 family. In terms of assembly, interacts with host CTPB1; this interaction leads to gene repression, but also seems to interfere with the repressive function of CtBP pre-bound to DNA, leading to EBNA6 mediated up-regulation of many host genes. Interacts with host MYC; this interaction enhances MYC stability. Interacts (via N-terminus) with host RBPJ. Interacts (via N-terminus) with host histone H2AX; this interaction facilitates H2AX proteasomal degradation. Interacts with host TP73; this interaction inhibits TP73-mediated apoptotic pathway. Interacts (via N-terminus) with host PIM1; this interaction upregulates and stabilizes PIM1 and induces cell proliferation by inhibiting the growth suppressive properties of p21.

The protein localises to the host nucleus. The protein resides in the host nucleus matrix. Its function is as follows. Plays an essential role for the activation and immortalization of human B-cells. Represses transcription of viral promoters TP1 and Cp through interaction with host RBPJ, and inhibits EBNA2-mediated activation of these promoters. Targets host chromatin through interactions with host transcription factors, especially RBPJ and IRF4. Alternatively, EBNA6 also regulates the transcription of the EBV oncogene LMP1 in a cell cycle-dependent manner. Modulates the activity of several host proteins involved in cell cycle regulation including host cyclin A, MYC, RB, p21 and p27 mainly through binding to the host SCF(SKP2) complex. Inhibits the promoter of host H2AX and targets H2AX to proteasomal degradation in order to promote latency and cell proliferation. Upregulates host PIM1 expression and stabilization. Potentiates PIM1 to promote cell proliferation by inhibiting the growth suppressive properties of p21. The protein is Epstein-Barr nuclear antigen 6 (EBNA6) of Epstein-Barr virus (strain B95-8) (HHV-4).